A 521-amino-acid chain; its full sequence is Fucosyltransferase 3 (521 aa).

Positions M1–D12 are enriched in basic and acidic residues. Positions M1–M29 are disordered. The Cytoplasmic portion of the chain corresponds to M1–T39. Over residues L14–L26 the composition is skewed to polar residues. Residues M40–L60 traverse the membrane as a helical; Signal-anchor for type II membrane protein segment. Residues R61–D521 are Lumenal-facing. Residues N152, N222, and N493 are each glycosylated (N-linked (GlcNAc...) asparagine).

This sequence belongs to the glycosyltransferase 37 family. In terms of tissue distribution, expressed in roots, stems, leaves, flowers, siliques and seedlings.

The protein localises to the golgi apparatus. It is found in the golgi stack membrane. The protein operates within protein modification; protein glycosylation. In terms of biological role, may be involved in cell wall biosynthesis. May act as a fucosyltransferase. This is Fucosyltransferase 3 (FUT3) from Arabidopsis thaliana (Mouse-ear cress).